Reading from the N-terminus, the 26-residue chain is Dermaseptin-J1 (26 aa).

Val-26 carries the post-translational modification Valine amide.

Expressed by the skin glands.

It localises to the secreted. Has antimicrobial activity. The sequence is that of Dermaseptin-J1 from Phasmahyla jandaia (Jandaia leaf frog).